Here is a 168-residue protein sequence, read N- to C-terminus: Ribosome maturation factor RimM (168 aa).

The region spanning 95 to 166 is the PRC barrel domain; the sequence is EHEFYYSDII…RIQITPMEGL (72 aa).

It belongs to the RimM family. Binds ribosomal protein uS19.

The protein resides in the cytoplasm. Functionally, an accessory protein needed during the final step in the assembly of 30S ribosomal subunit, possibly for assembly of the head region. Essential for efficient processing of 16S rRNA. May be needed both before and after RbfA during the maturation of 16S rRNA. It has affinity for free ribosomal 30S subunits but not for 70S ribosomes. This is Ribosome maturation factor RimM from Staphylococcus saprophyticus subsp. saprophyticus (strain ATCC 15305 / DSM 20229 / NCIMB 8711 / NCTC 7292 / S-41).